Here is a 581-residue protein sequence, read N- to C-terminus: Frizzled-3 (581 aa).

Positions 1–19 are cleaved as a signal peptide; the sequence is MYAASILILHLTWAVATIA. Topologically, residues 20 to 237 are extracellular; the sequence is ANGAGHNGPV…TSSQKKTSET (218 aa). The 122-residue stretch at 35–156 folds into the FZ domain; sequence PNGLQCQPIA…PEKHELCMQI (122 aa). Disulfide bonds link cysteine 40/cysteine 101, cysteine 48/cysteine 94, cysteine 85/cysteine 123, cysteine 112/cysteine 153, and cysteine 116/cysteine 141. The N-linked (GlcNAc...) asparagine glycan is linked to asparagine 54. The N-linked (GlcNAc...) asparagine glycan is linked to asparagine 206. Residues 238–258 form a helical membrane-spanning segment; it reads LILGLSAVCFVLTLFALVTFW. The Cytoplasmic portion of the chain corresponds to 259–270; sequence AEPTRFGYPERP. Residues 271–291 traverse the membrane as a helical segment; the sequence is VLFLCLCYNLFSVCYLERIVF. Residues 292–321 lie on the Extracellular side of the membrane; that stretch reads HNQARMHDVELQGRLMRPGCLLTPPCLASY. A helical transmembrane segment spans residues 322 to 342; that stretch reads ITTSYLSLCAASWWLIFALCF. Residues 343–359 are Cytoplasmic-facing; it reads YLSSHKKWSSEALEKRS. A helical membrane pass occupies residues 360 to 380; that stretch reads GLFHVLAWVPPLAPPIAALLL. At 381–393 the chain is on the extracellular side; the sequence is EKVRPSELTGMCY. The helical transmembrane segment at 394–414 threads the bilayer; sequence APGFVELPALVLLLLGLYFTL. At 415–442 the chain is on the cytoplasmic side; that stretch reads RASRSLLSLQQQLQPTLAHHRFGQIRKR. The chain crosses the membrane as a helical span at residues 443 to 463; that stretch reads FVLFSLLYFAPTTAGVVAALC. Over 464 to 488 the chain is Extracellular; it reads ERYADSVPSCSTPDDCLSPTPLSAW. Residues 489 to 509 traverse the membrane as a helical segment; it reads PALVRIFFQLVGGTLTGLWVW. Topologically, residues 510 to 581 are cytoplasmic; that stretch reads SRKTCESYRN…PVYNPNQSRV (72 aa). The PDZ-binding signature appears at 579–581; the sequence is SRV.

Belongs to the G-protein coupled receptor Fz/Smo family. In terms of tissue distribution, wing, leg and eye imaginal disks. In embryos, expressed is seen in brain, proventriculus, Malpighian tubules, anal plate and visceral mesoderm of parasegment 8.

The protein resides in the membrane. Functionally, receptor for Wnt proteins. Most of frizzled receptors are coupled to the beta-catenin canonical signaling pathway, which leads to the activation of disheveled proteins, inhibition of GSK-3 kinase, nuclear accumulation of beta-catenin and activation of Wnt target genes. A second signaling pathway involving PKC and calcium fluxes has been seen for some family members, but it is not yet clear if it represents a distinct pathway or if it can be integrated in the canonical pathway, as PKC seems to be required for Wnt-mediated inactivation of GSK-3 kinase. Both pathways seem to involve interactions with G-proteins. Required to coordinate the cytoskeletons of epidermal cells to produce a parallel array of cuticular hairs and bristles. This is Frizzled-3 (fz3) from Drosophila melanogaster (Fruit fly).